The sequence spans 232 residues: Orotidine 5'-phosphate decarboxylase (232 aa).

Substrate-binding positions include Asp-11, Lys-33, 60-69 (DLKFHDIPNT), Thr-120, Arg-181, Gln-190, Gly-210, and Arg-211. The Proton donor role is filled by Lys-62.

This sequence belongs to the OMP decarboxylase family. Type 1 subfamily. As to quaternary structure, homodimer.

The catalysed reaction is orotidine 5'-phosphate + H(+) = UMP + CO2. It participates in pyrimidine metabolism; UMP biosynthesis via de novo pathway; UMP from orotate: step 2/2. Functionally, catalyzes the decarboxylation of orotidine 5'-monophosphate (OMP) to uridine 5'-monophosphate (UMP). In Vibrio vulnificus (strain YJ016), this protein is Orotidine 5'-phosphate decarboxylase.